Consider the following 86-residue polypeptide: Co-chaperonin GroES (86 aa).

It belongs to the GroES chaperonin family. Heptamer of 7 subunits arranged in a ring. Interacts with the chaperonin GroEL.

It is found in the cytoplasm. Together with the chaperonin GroEL, plays an essential role in assisting protein folding. The GroEL-GroES system forms a nano-cage that allows encapsulation of the non-native substrate proteins and provides a physical environment optimized to promote and accelerate protein folding. GroES binds to the apical surface of the GroEL ring, thereby capping the opening of the GroEL channel. The protein is Co-chaperonin GroES of Sulfurovum sp. (strain NBC37-1).